Consider the following 274-residue polypeptide: MKFVVLTDTHFVARGRRIYGLDPAERLSAAVARINREHPDIAFVIVTGDLAHWGEEPAYDNLASVLAGLRAPTILMMGNHDKREAFAKFFPGVPRDASGFVQTVQVFEAATIVTLDTLNEAAPNHEGFLCEARLAFLEHALAEAPADRPLLLFQHHPPFDTGLRYMDTIRLANPDAEWEVIARTRKPDYLFMGHLHRPISGVWRGIPFHIQRGLAHQVAFDLVAEGHIPGSHEPPDYAHVSVEADRIVIHQCSFMYDGPLFSLHDSVALHRVSF.

D8, H10, D49, N79, H155, H194, and H196 together coordinate Fe cation. Residues H10, D49, and 79 to 80 contribute to the AMP site; that span reads NH. H196 provides a ligand contact to AMP.

Belongs to the cyclic nucleotide phosphodiesterase class-III family. Fe(2+) is required as a cofactor.

This chain is Probable cyclic nucleotide phosphodiesterase RPA0124, found in Rhodopseudomonas palustris (strain ATCC BAA-98 / CGA009).